The sequence spans 709 residues: DNA ligase (709 aa).

The interval 1-20 is disordered; that stretch reads MTATHRGAQADASAPAGPLP. NAD(+) is bound by residues 52-56, 101-102, and E146; these read DAEYD and SL. The active-site N6-AMP-lysine intermediate is K148. R169, E205, K322, and K346 together coordinate NAD(+). Zn(2+)-binding residues include C440, C443, C458, and C464. Positions 623-709 constitute a BRCT domain; it reads KAPAPLSGKT…AEAGAAPAQE (87 aa).

It belongs to the NAD-dependent DNA ligase family. LigA subfamily. Mg(2+) is required as a cofactor. The cofactor is Mn(2+).

The catalysed reaction is NAD(+) + (deoxyribonucleotide)n-3'-hydroxyl + 5'-phospho-(deoxyribonucleotide)m = (deoxyribonucleotide)n+m + AMP + beta-nicotinamide D-nucleotide.. Functionally, DNA ligase that catalyzes the formation of phosphodiester linkages between 5'-phosphoryl and 3'-hydroxyl groups in double-stranded DNA using NAD as a coenzyme and as the energy source for the reaction. It is essential for DNA replication and repair of damaged DNA. This is DNA ligase from Cupriavidus necator (strain ATCC 17699 / DSM 428 / KCTC 22496 / NCIMB 10442 / H16 / Stanier 337) (Ralstonia eutropha).